The primary structure comprises 317 residues: Ribonuclease Z (317 aa).

Zn(2+)-binding residues include His-62, His-64, Asp-66, His-67, His-139, Asp-210, and His-268. Asp-66 serves as the catalytic Proton acceptor.

It belongs to the RNase Z family. As to quaternary structure, homodimer. Requires Zn(2+) as cofactor.

It carries out the reaction Endonucleolytic cleavage of RNA, removing extra 3' nucleotides from tRNA precursor, generating 3' termini of tRNAs. A 3'-hydroxy group is left at the tRNA terminus and a 5'-phosphoryl group is left at the trailer molecule.. In terms of biological role, zinc phosphodiesterase, which displays some tRNA 3'-processing endonuclease activity. Probably involved in tRNA maturation, by removing a 3'-trailer from precursor tRNA. The chain is Ribonuclease Z from Picosynechococcus sp. (strain ATCC 27264 / PCC 7002 / PR-6) (Agmenellum quadruplicatum).